The chain runs to 85 residues: Protein BTH_I0359 (85 aa).

This Burkholderia thailandensis (strain ATCC 700388 / DSM 13276 / CCUG 48851 / CIP 106301 / E264) protein is Protein BTH_I0359.